Consider the following 481-residue polypeptide: Putative F-box/FBD/LRR-repeat protein At5g25850 (481 aa).

The F-box domain maps to Ile-19–Phe-69. LRR repeat units lie at residues Val-123–His-151, Val-173–Val-198, and His-328–Phe-356. Residues Gln-401–Pro-452 form the FBD domain.

This chain is Putative F-box/FBD/LRR-repeat protein At5g25850, found in Arabidopsis thaliana (Mouse-ear cress).